The chain runs to 275 residues: 2,3,4,5-tetrahydropyridine-2,6-dicarboxylate N-succinyltransferase (275 aa).

Residues arginine 107 and aspartate 144 each coordinate substrate.

The protein belongs to the transferase hexapeptide repeat family. In terms of assembly, homotrimer.

It localises to the cytoplasm. It catalyses the reaction (S)-2,3,4,5-tetrahydrodipicolinate + succinyl-CoA + H2O = (S)-2-succinylamino-6-oxoheptanedioate + CoA. Its pathway is amino-acid biosynthesis; L-lysine biosynthesis via DAP pathway; LL-2,6-diaminopimelate from (S)-tetrahydrodipicolinate (succinylase route): step 1/3. The polypeptide is 2,3,4,5-tetrahydropyridine-2,6-dicarboxylate N-succinyltransferase (Polynucleobacter asymbioticus (strain DSM 18221 / CIP 109841 / QLW-P1DMWA-1) (Polynucleobacter necessarius subsp. asymbioticus)).